We begin with the raw amino-acid sequence, 266 residues long: Probable catechol O-methyltransferase 1 (266 aa).

Residues I56, E78, S86, E106, V107, A135, and D162 each coordinate S-adenosyl-L-methionine. A Mg(2+)-binding site is contributed by D162. K165 contributes to the substrate binding site. Residues D190 and N191 each coordinate Mg(2+). A substrate-binding site is contributed by N191.

Belongs to the class I-like SAM-binding methyltransferase superfamily. Cation-dependent O-methyltransferase family. It depends on Mg(2+) as a cofactor.

The protein localises to the cytoplasm. It is found in the nucleus. It carries out the reaction a catechol + S-adenosyl-L-methionine = a guaiacol + S-adenosyl-L-homocysteine + H(+). This chain is Probable catechol O-methyltransferase 1, found in Schizosaccharomyces pombe (strain 972 / ATCC 24843) (Fission yeast).